We begin with the raw amino-acid sequence, 213 residues long: Putative protein Brevis radix-like 3 (213 aa).

The disordered stretch occupies residues Cys-7–Asp-27. The BRX domain maps to Arg-158–Leu-213.

It belongs to the BRX family.

It localises to the nucleus. This is Putative protein Brevis radix-like 3 (BRXL3) from Oryza sativa subsp. japonica (Rice).